The primary structure comprises 235 residues: Octanoyltransferase (235 aa).

One can recognise a BPL/LPL catalytic domain in the interval 44 to 231 (DTTADELWLV…HQVGLPNENN (188 aa)). Substrate is bound by residues 83–90 (RGGQVTYH), 150–152 (SLG), and 163–165 (GLA). Residue cysteine 181 is the Acyl-thioester intermediate of the active site.

It belongs to the LipB family.

It is found in the cytoplasm. It carries out the reaction octanoyl-[ACP] + L-lysyl-[protein] = N(6)-octanoyl-L-lysyl-[protein] + holo-[ACP] + H(+). It functions in the pathway protein modification; protein lipoylation via endogenous pathway; protein N(6)-(lipoyl)lysine from octanoyl-[acyl-carrier-protein]: step 1/2. In terms of biological role, catalyzes the transfer of endogenously produced octanoic acid from octanoyl-acyl-carrier-protein onto the lipoyl domains of lipoate-dependent enzymes. Lipoyl-ACP can also act as a substrate although octanoyl-ACP is likely to be the physiological substrate. The polypeptide is Octanoyltransferase (Colwellia psychrerythraea (strain 34H / ATCC BAA-681) (Vibrio psychroerythus)).